A 179-amino-acid polypeptide reads, in one-letter code: Large ribosomal subunit protein uL6 (179 aa).

It belongs to the universal ribosomal protein uL6 family. In terms of assembly, part of the 50S ribosomal subunit.

Its function is as follows. This protein binds to the 23S rRNA, and is important in its secondary structure. It is located near the subunit interface in the base of the L7/L12 stalk, and near the tRNA binding site of the peptidyltransferase center. The sequence is that of Large ribosomal subunit protein uL6 from Bacillus subtilis (strain 168).